Here is a 334-residue protein sequence, read N- to C-terminus: MGMKKNRPRRGSLAFSPRKRAKKLVPKIRSWPADKKVGLQAFPVYKAGTTHALLIENNPKSPNSSQEVFTPVTVLETPDVTVAGIRLYEKTTKGLKALTEVWAEQLDSDLGRKLTLAKKEEKKTVDALDAVLEKATEVRAIVHTNPKTTGIPKKKPEVVEIRIGGSSVAERLAYAKEILGKTLAISDVFEAGEIIDTLAITKGKGFQGSVKRWGIKVQFGKHQRKGVGRHTGSIGPWRPRRVMWTVPLPGQMGFHQRTEYNKRILKLGSEGAEITPKGGFLNYGAVKNGYVVVKGTVQGPAKRLVVLRGSVRAAEDKFGLPEIAYISTESKQGN.

The span at 1–10 (MGMKKNRPRR) shows a compositional bias: basic residues. The disordered stretch occupies residues 1-21 (MGMKKNRPRRGSLAFSPRKRA).

Belongs to the universal ribosomal protein uL3 family. As to quaternary structure, part of the 50S ribosomal subunit. Forms a cluster with proteins L14 and L24e.

Its function is as follows. One of the primary rRNA binding proteins, it binds directly near the 3'-end of the 23S rRNA, where it nucleates assembly of the 50S subunit. In Methanococcus maripaludis (strain DSM 14266 / JCM 13030 / NBRC 101832 / S2 / LL), this protein is Large ribosomal subunit protein uL3.